A 131-amino-acid chain; its full sequence is Small ribosomal subunit protein uS8 (131 aa).

The protein belongs to the universal ribosomal protein uS8 family. In terms of assembly, part of the 30S ribosomal subunit. Contacts proteins S5 and S12.

Its function is as follows. One of the primary rRNA binding proteins, it binds directly to 16S rRNA central domain where it helps coordinate assembly of the platform of the 30S subunit. This Delftia acidovorans (strain DSM 14801 / SPH-1) protein is Small ribosomal subunit protein uS8.